The primary structure comprises 51 residues: Defensin (51 aa).

Cystine bridges form between cysteine 3–cysteine 31, cysteine 17–cysteine 36, and cysteine 21–cysteine 38. Phenylalanine 51 bears the Phenylalanine amide mark.

Its subcellular location is the secreted. In terms of biological role, antibacterial peptide against Gram-positive and Gram-negative bacteria and fungi. The polypeptide is Defensin (Bombus pascuorum (Common carder bumblebee)).